Reading from the N-terminus, the 609-residue chain is Glutamine--fructose-6-phosphate aminotransferase [isomerizing] (609 aa).

Cys-2 (nucleophile; for GATase activity) is an active-site residue. The Glutamine amidotransferase type-2 domain maps to 2 to 217 (CGIVGYIGRR…EGWLAELTPE (216 aa)). SIS domains are found at residues 286 to 425 (SAAE…QNGR) and 458 to 599 (AAEA…VDKP). Lys-604 functions as the For Fru-6P isomerization activity in the catalytic mechanism.

In terms of assembly, homodimer.

It localises to the cytoplasm. It catalyses the reaction D-fructose 6-phosphate + L-glutamine = D-glucosamine 6-phosphate + L-glutamate. Catalyzes the first step in hexosamine metabolism, converting fructose-6P into glucosamine-6P using glutamine as a nitrogen source. This Symbiobacterium thermophilum (strain DSM 24528 / JCM 14929 / IAM 14863 / T) protein is Glutamine--fructose-6-phosphate aminotransferase [isomerizing].